Here is a 146-residue protein sequence, read N- to C-terminus: Large ribosomal subunit protein bL17 (146 aa).

Positions 124 to 134 are enriched in low complexity; it reads EASRATRAAAS. A disordered region spans residues 124–146; sequence EASRATRAAASKKAEEEAASEAE.

Belongs to the bacterial ribosomal protein bL17 family. As to quaternary structure, part of the 50S ribosomal subunit. Contacts protein L32.

This Corynebacterium kroppenstedtii (strain DSM 44385 / JCM 11950 / CIP 105744 / CCUG 35717) protein is Large ribosomal subunit protein bL17.